A 543-amino-acid polypeptide reads, in one-letter code: Carboxypeptidase Y homolog A (543 aa).

The first 17 residues, 1 to 17 (MRVAASALLAGAASAAV), serve as a signal peptide directing secretion. Positions 18–128 (APQQQILKFP…KLEQFDLRVK (111 aa)) are excised as a propeptide. Cystine bridges form between C182–C421, C316–C330, C340–C363, C347–C356, and C385–C391. N213 carries an N-linked (GlcNAc...) asparagine glycan. The active site involves S269. The active site involves D460. A glycan (N-linked (GlcNAc...) asparagine) is linked at N508. H519 is an active-site residue.

It belongs to the peptidase S10 family.

Its subcellular location is the vacuole. The catalysed reaction is Release of a C-terminal amino acid with broad specificity.. Its function is as follows. Vacuolar carboxypeptidase involved in degradation of small peptides. Digests preferentially peptides containing an aliphatic or hydrophobic residue in P1' position, as well as methionine, leucine or phenylalanine in P1 position of ester substrate. The sequence is that of Carboxypeptidase Y homolog A (CPYA) from Phaeosphaeria nodorum (strain SN15 / ATCC MYA-4574 / FGSC 10173) (Glume blotch fungus).